The following is a 166-amino-acid chain: Small ribosomal subunit protein uS5 (166 aa).

In terms of domain architecture, S5 DRBM spans 11–74 (LQEKLIAVNR…EKARRNMMNV (64 aa)).

The protein belongs to the universal ribosomal protein uS5 family. In terms of assembly, part of the 30S ribosomal subunit. Contacts proteins S4 and S8.

Its function is as follows. With S4 and S12 plays an important role in translational accuracy. Located at the back of the 30S subunit body where it stabilizes the conformation of the head with respect to the body. The protein is Small ribosomal subunit protein uS5 of Pectobacterium atrosepticum (strain SCRI 1043 / ATCC BAA-672) (Erwinia carotovora subsp. atroseptica).